The primary structure comprises 67 residues: Bowman-Birk type proteinase inhibitor 1 (67 aa).

7 cysteine pairs are disulfide-bonded: cysteine 5–cysteine 59, cysteine 6–cysteine 21, cysteine 9–cysteine 55, cysteine 11–cysteine 19, cysteine 29–cysteine 36, cysteine 33–cysteine 48, and cysteine 38–cysteine 46.

It belongs to the Bowman-Birk serine protease inhibitor family. In terms of assembly, monomer. Although dimerization may occur in solution. Seed.

In terms of biological role, inhibits trypsin but not chymotrypsin. The inhibitor consists of 2 domains and has 2 sites of interaction with trypsin. This chain is Bowman-Birk type proteinase inhibitor 1, found in Dioclea glabra.